A 227-amino-acid polypeptide reads, in one-letter code: MGASARLLRAVIMGAPGSGKGTVSSRITTHFELKHLSSGDLLRDNMLRGTEIGVLAKAFIDQGKLIPDDVMTRLALHELKNLTQYSWLLDGFPRTLPQAEALDRAYQIDTVINLNVPFEVIKQRLTARWIHPASGRVYNIEFNPPKTVGIDDLTGEPLIQREDDKPETVIKRLKAYEDQTKPVLEYYQKKGVLETFSGTETNKIWPYVYAFLQTKVPQRSQKASVTP.

Positions 17, 19, 20, 21, and 22 each coordinate GTP. N6-succinyllysine is present on Lys20. The residue at position 34 (Lys34) is an N6-acetyllysine. Ser37 is modified (phosphoserine). The segment at 37–66 (SSGDLLRDNMLRGTEIGVLAKAFIDQGKLI) is NMP. The AMP site is built by Ser38 and Arg43. At Lys57 the chain carries N6-succinyllysine. Lys64 is a binding site for AMP. Residues Lys64 and Lys80 each carry the N6-acetyllysine; alternate modification. N6-succinyllysine; alternate occurs at positions 64 and 80. AMP-binding residues include Gly91, Arg94, and Gln98. The LID stretch occupies residues 127-164 (ARWIHPASGRVYNIEFNPPKTVGIDDLTGEPLIQREDD). The GTP site is built by Arg128, Tyr138, Asn139, Arg161, and Arg172. N6-acetyllysine; alternate is present on residues Lys174 and Lys189. N6-succinyllysine; alternate is present on residues Lys174 and Lys189. Thr201 is a GTP binding site. Lys203 carries the N6-acetyllysine modification.

Belongs to the adenylate kinase family. AK3 subfamily. In terms of assembly, monomer. As to expression, highly expressed in heart, skeletal muscle and liver, moderately expressed in pancreas and kidney, and weakly expressed in placenta, brain and lung.

The protein resides in the mitochondrion matrix. The enzyme catalyses a ribonucleoside 5'-triphosphate + AMP = a ribonucleoside 5'-diphosphate + ADP. The catalysed reaction is GTP + AMP = GDP + ADP. It catalyses the reaction ITP + AMP = IDP + ADP. With respect to regulation, inhibited by ATP. In terms of biological role, mitochondrial adenylate kinase with a specific GTP:AMP phosphotransferase activity. Could also use ITP as phosphate donor. Its physiological function is to recycle GTP into GDP which is necessary for the TCA cycle in the mitochondrial matrix. This chain is GTP:AMP phosphotransferase AK3, mitochondrial, found in Homo sapiens (Human).